The chain runs to 473 residues: tRNA modification GTPase MnmE (473 aa).

Positions 30, 95, and 134 each coordinate (6S)-5-formyl-5,6,7,8-tetrahydrofolate. The region spanning 230–394 is the TrmE-type G domain; the sequence is GVSTVIAGRP…LKLLMASMVE (165 aa). GTP-binding positions include 240–245, 259–265, and 284–287; these read NAGKST, SHMPGTT, and DTAG. The Mg(2+) site is built by Ser244 and Thr265. A (6S)-5-formyl-5,6,7,8-tetrahydrofolate-binding site is contributed by Lys473.

It belongs to the TRAFAC class TrmE-Era-EngA-EngB-Septin-like GTPase superfamily. TrmE GTPase family. As to quaternary structure, homodimer. Heterotetramer of two MnmE and two MnmG subunits. Requires K(+) as cofactor.

The protein localises to the cytoplasm. Exhibits a very high intrinsic GTPase hydrolysis rate. Involved in the addition of a carboxymethylaminomethyl (cmnm) group at the wobble position (U34) of certain tRNAs, forming tRNA-cmnm(5)s(2)U34. This Chlorobium luteolum (strain DSM 273 / BCRC 81028 / 2530) (Pelodictyon luteolum) protein is tRNA modification GTPase MnmE.